Reading from the N-terminus, the 204-residue chain is Dephospho-CoA kinase (204 aa).

The DPCK domain occupies 13-204; the sequence is RIGLTGGIAS…LWKNTIKKLV (192 aa). An ATP-binding site is contributed by 21-26; the sequence is ASGKST.

Belongs to the CoaE family.

It is found in the cytoplasm. The enzyme catalyses 3'-dephospho-CoA + ATP = ADP + CoA + H(+). It functions in the pathway cofactor biosynthesis; coenzyme A biosynthesis; CoA from (R)-pantothenate: step 5/5. Functionally, catalyzes the phosphorylation of the 3'-hydroxyl group of dephosphocoenzyme A to form coenzyme A. The chain is Dephospho-CoA kinase from Prochlorococcus marinus subsp. pastoris (strain CCMP1986 / NIES-2087 / MED4).